Consider the following 436-residue polypeptide: 3-ketoacyl-CoA thiolase (436 aa).

Catalysis depends on cysteine 99, which acts as the Acyl-thioester intermediate. Residues histidine 392 and cysteine 422 each act as proton acceptor in the active site.

It belongs to the thiolase-like superfamily. Thiolase family. Heterotetramer of two alpha chains (FadJ) and two beta chains (FadI).

The protein localises to the cytoplasm. The catalysed reaction is an acyl-CoA + acetyl-CoA = a 3-oxoacyl-CoA + CoA. It functions in the pathway lipid metabolism; fatty acid beta-oxidation. In terms of biological role, catalyzes the final step of fatty acid oxidation in which acetyl-CoA is released and the CoA ester of a fatty acid two carbons shorter is formed. The polypeptide is 3-ketoacyl-CoA thiolase (Escherichia coli (strain ATCC 8739 / DSM 1576 / NBRC 3972 / NCIMB 8545 / WDCM 00012 / Crooks)).